The following is a 600-amino-acid chain: RNA-binding protein 47 (600 aa).

Low complexity predominate over residues 1–25; sequence MTAEDSASAVAMSNPSPSSSSKSSS. Residues 1–37 are disordered; that stretch reads MTAEDSASAVAMSNPSPSSSSKSSSGHPQHHCTVPEG. RRM domains are found at residues 82–160, 162–244, and 257–329; these read CEIF…SSVD, CRLF…WAEP, and KILY…LAKP.

The protein belongs to the RRM RBM47 family. As to quaternary structure, homodimer. May interact with MAVS; may regulate MAVS lysosomal degradation.

It localises to the nucleus. The protein localises to the cytoplasm. In terms of biological role, single-stranded RNA-binding protein that functions in a variety of RNA processes, including alternative splicing, RNA stabilization, and RNA editing. Independently of its RNA-binding activity, could negatively regulate MAVS by promoting its lysosomal degradation. The sequence is that of RNA-binding protein 47 (rbm47) from Danio rerio (Zebrafish).